The primary structure comprises 336 residues: Probable deoxyhypusine synthase (336 aa).

K308 (nucleophile) is an active-site residue.

It belongs to the deoxyhypusine synthase family. NAD(+) serves as cofactor.

It carries out the reaction [eIF5A protein]-L-lysine + spermidine = [eIF5A protein]-deoxyhypusine + propane-1,3-diamine. It functions in the pathway protein modification; eIF5A hypusination. In terms of biological role, catalyzes the NAD-dependent oxidative cleavage of spermidine and the subsequent transfer of the butylamine moiety of spermidine to the epsilon-amino group of a specific lysine residue of the eIF-5A precursor protein to form the intermediate deoxyhypusine residue. This chain is Probable deoxyhypusine synthase, found in Pyrococcus furiosus (strain ATCC 43587 / DSM 3638 / JCM 8422 / Vc1).